Consider the following 170-residue polypeptide: MNSCLNELQAMQLRRLLETGLPLAARPYQRLAEQIGSVEEHVLQQIQRWQEEGLFRRVGLVLKHRALGFRANAMLVMDIPDAQVDEIGRRLGQAAGVNLCYQRPRRLPQWPYNLFCMVHGREREQVCQLIERLLADNGLSEVPHQLLFSTRAFKQCGGRFAPPLREVVNG.

Belongs to the Ahb/Nir family. As to quaternary structure, probably forms a complex composed of NirD, NirL, NirG and NirH. All proteins are required for the total conversion of siroheme to didecarboxysiroheme.

It carries out the reaction siroheme + 2 H(+) = 12,18-didecarboxysiroheme + 2 CO2. Its pathway is porphyrin-containing compound metabolism. Its function is as follows. Involved in heme d1 biosynthesis. Catalyzes the decarboxylation of siroheme into didecarboxysiroheme. This chain is Siroheme decarboxylase NirL subunit, found in Stutzerimonas stutzeri (Pseudomonas stutzeri).